The sequence spans 254 residues: NADPH-dependent ferric-chelate reductase (254 aa).

Positions 15-136 (LRFRELTVLR…AGPRGSLVVP (122 aa)) constitute an FAD-binding FR-type domain.

It belongs to the SIP oxidoreductase family.

The protein localises to the cytoplasm. The catalysed reaction is 2 a Fe(II)-siderophore + NADP(+) + H(+) = 2 a Fe(III)-siderophore + NADPH. Plays a role in iron homeostasis under excess nickel conditions. The polypeptide is NADPH-dependent ferric-chelate reductase (yqjH) (Escherichia coli (strain K12)).